A 128-amino-acid chain; its full sequence is Transcription antitermination protein NusB (128 aa).

This sequence belongs to the NusB family.

In terms of biological role, involved in transcription antitermination. Required for transcription of ribosomal RNA (rRNA) genes. Binds specifically to the boxA antiterminator sequence of the ribosomal RNA (rrn) operons. This is Transcription antitermination protein NusB from Listeria monocytogenes serotype 4b (strain CLIP80459).